A 440-amino-acid chain; its full sequence is Xylose isomerase (440 aa).

Mg(2+) contacts are provided by Asp-307 and Asp-309.

Belongs to the xylose isomerase family. In terms of assembly, homotetramer. Requires Mg(2+) as cofactor.

It localises to the cytoplasm. The enzyme catalyses alpha-D-xylose = alpha-D-xylulofuranose. The protein is Xylose isomerase of Escherichia coli (strain K12 / MC4100 / BW2952).